The primary structure comprises 272 residues: Sulfate transporter CysZ (272 aa).

4 helical membrane passes run 29–49 (FVIM…WLFI), 66–86 (WLSF…LLLF), 148–168 (IIAL…VPVL), and 219–239 (FVPV…TLMW).

Belongs to the CysZ family.

Its subcellular location is the cell inner membrane. High affinity, high specificity proton-dependent sulfate transporter, which mediates sulfate uptake. Provides the sulfur source for the cysteine synthesis pathway. The sequence is that of Sulfate transporter CysZ from Haemophilus influenzae (strain ATCC 51907 / DSM 11121 / KW20 / Rd).